A 78-amino-acid chain; its full sequence is Translational regulator CsrA (78 aa).

It belongs to the CsrA/RsmA family. As to quaternary structure, homodimer; the beta-strands of each monomer intercalate to form a hydrophobic core, while the alpha-helices form wings that extend away from the core.

It localises to the cytoplasm. Its function is as follows. A translational regulator that binds mRNA to regulate translation initiation and/or mRNA stability. Usually binds in the 5'-UTR at or near the Shine-Dalgarno sequence preventing ribosome-binding, thus repressing translation. Its main target seems to be the major flagellin gene, while its function is anatagonized by FliW. In Caldicellulosiruptor bescii (strain ATCC BAA-1888 / DSM 6725 / KCTC 15123 / Z-1320) (Anaerocellum thermophilum), this protein is Translational regulator CsrA.